The primary structure comprises 135 residues: ATP synthase epsilon chain (135 aa).

It belongs to the ATPase epsilon chain family. As to quaternary structure, F-type ATPases have 2 components, CF(1) - the catalytic core - and CF(0) - the membrane proton channel. CF(1) has five subunits: alpha(3), beta(3), gamma(1), delta(1), epsilon(1). CF(0) has three main subunits: a, b and c.

It is found in the cell inner membrane. In terms of biological role, produces ATP from ADP in the presence of a proton gradient across the membrane. This Nitrobacter winogradskyi (strain ATCC 25391 / DSM 10237 / CIP 104748 / NCIMB 11846 / Nb-255) protein is ATP synthase epsilon chain.